The sequence spans 154 residues: CASP-like protein ARALYDRAFT_485429 (154 aa).

Topologically, residues 1 to 12 (MENVPGSFGTSA) are cytoplasmic. A helical membrane pass occupies residues 13–33 (SFALRFGQTIFSAASLIFMCF). Residues 34–41 (DYDFYDFT) are Extracellular-facing. A helical membrane pass occupies residues 42 to 62 (TFCYLATVMAIVTPWSILLAL). The Cytoplasmic segment spans residues 63 to 81 (TDTYSVLVKLLPQELRVLS). Residues 82 to 102 (IVFAGDFVLSFLSLGGACAVA) traverse the membrane as a helical segment. At 103 to 128 (SATELLASADGKICDGNLCIQYQVSA) the chain is on the extracellular side. A helical membrane pass occupies residues 129-149 (ALAFLCWFLLLASALFNFWSL). At 150-154 (PSLYY) the chain is on the cytoplasmic side.

The protein belongs to the Casparian strip membrane proteins (CASP) family. Homodimer and heterodimers.

The protein resides in the cell membrane. In Arabidopsis lyrata subsp. lyrata (Lyre-leaved rock-cress), this protein is CASP-like protein ARALYDRAFT_485429.